A 310-amino-acid chain; its full sequence is Porphobilinogen deaminase (310 aa).

The residue at position 242 (C242) is an S-(dipyrrolylmethanemethyl)cysteine.

It belongs to the HMBS family. Monomer. Requires dipyrromethane as cofactor.

It catalyses the reaction 4 porphobilinogen + H2O = hydroxymethylbilane + 4 NH4(+). It participates in porphyrin-containing compound metabolism; protoporphyrin-IX biosynthesis; coproporphyrinogen-III from 5-aminolevulinate: step 2/4. Tetrapolymerization of the monopyrrole PBG into the hydroxymethylbilane pre-uroporphyrinogen in several discrete steps. This Shewanella halifaxensis (strain HAW-EB4) protein is Porphobilinogen deaminase.